The sequence spans 498 residues: ATP synthase subunit beta, chloroplastic (498 aa).

172 to 179 contacts ATP; sequence GGAGVGKT.

Belongs to the ATPase alpha/beta chains family. F-type ATPases have 2 components, CF(1) - the catalytic core - and CF(0) - the membrane proton channel. CF(1) has five subunits: alpha(3), beta(3), gamma(1), delta(1), epsilon(1). CF(0) has four main subunits: a(1), b(1), b'(1) and c(9-12).

Its subcellular location is the plastid. The protein localises to the chloroplast thylakoid membrane. The enzyme catalyses ATP + H2O + 4 H(+)(in) = ADP + phosphate + 5 H(+)(out). Produces ATP from ADP in the presence of a proton gradient across the membrane. The catalytic sites are hosted primarily by the beta subunits. The chain is ATP synthase subunit beta, chloroplastic from Beta vulgaris (Sugar beet).